A 317-amino-acid polypeptide reads, in one-letter code: Acetyl-coenzyme A carboxylase carboxyl transferase subunit alpha (317 aa).

The CoA carboxyltransferase C-terminal domain maps to 37 to 292 (EINKKLEQTK…ADYITKGYNE (256 aa)).

This sequence belongs to the AccA family. As to quaternary structure, acetyl-CoA carboxylase is a heterohexamer composed of biotin carboxyl carrier protein (AccB), biotin carboxylase (AccC) and two subunits each of ACCase subunit alpha (AccA) and ACCase subunit beta (AccD).

It localises to the cytoplasm. It carries out the reaction N(6)-carboxybiotinyl-L-lysyl-[protein] + acetyl-CoA = N(6)-biotinyl-L-lysyl-[protein] + malonyl-CoA. It participates in lipid metabolism; malonyl-CoA biosynthesis; malonyl-CoA from acetyl-CoA: step 1/1. In terms of biological role, component of the acetyl coenzyme A carboxylase (ACC) complex. First, biotin carboxylase catalyzes the carboxylation of biotin on its carrier protein (BCCP) and then the CO(2) group is transferred by the carboxyltransferase to acetyl-CoA to form malonyl-CoA. This Flavobacterium johnsoniae (strain ATCC 17061 / DSM 2064 / JCM 8514 / BCRC 14874 / CCUG 350202 / NBRC 14942 / NCIMB 11054 / UW101) (Cytophaga johnsonae) protein is Acetyl-coenzyme A carboxylase carboxyl transferase subunit alpha.